A 425-amino-acid polypeptide reads, in one-letter code: D-arabinitol transporter (425 aa).

Residues 1–7 (MSINNKQ) are Cytoplasmic-facing. A helical transmembrane segment spans residues 8 to 28 (WLGLPLNLLWGYIAIAVFMTG). Over 29-51 (DGFELAFLSHYIKALGFSPAEAS) the chain is Extracellular. The helical transmembrane segment at 52 to 72 (FAFTLYGLAAALSAWISGVVA) threads the bilayer. Residues 73–80 (EIITPLKT) lie on the Cytoplasmic side of the membrane. Residues 81 to 101 (MMIGFVLWCVFHVLFLVFGLG) form a helical membrane-spanning segment. The Extracellular segment spans residues 102-107 (HANYAL). Residues 108 to 128 (ILLFYGIRGFAYPLFLYSFIV) traverse the membrane as a helical segment. The Cytoplasmic portion of the chain corresponds to 129 to 141 (AIVHNVKSDNASS). The helical transmembrane segment at 142–162 (AIGWFWAVYSIGIGVFGSYIP) threads the bilayer. Residues 163-172 (SFTIPHIGEM) lie on the Extracellular side of the membrane. Residues 173–193 (GTLWLALAFCLTGGVIALVSL) form a helical membrane-spanning segment. At 194–237 (RHIQTPQHMQNLTTREKFSELGRAATLLYTNRNILLSSMVRIIN) the chain is on the cytoplasmic side. A helical transmembrane segment spans residues 238–258 (TLSLFGFAVIMPMMFVDELGF). Residues 259 to 263 (STSEW) are Extracellular-facing. Residues 264–284 (LQVWAVFFFTTIFSNVLWGIL) form a helical membrane-spanning segment. The Cytoplasmic segment spans residues 285–295 (GEKLGWMKVVR). The chain crosses the membrane as a helical span at residues 296-316 (WFGCIGMALSSLAFYYIPQHF). Topologically, residues 317–323 (GHSFAMA) are extracellular. Residues 324 to 344 (LIPAIALGIFVAAFVPLAAVF) traverse the membrane as a helical segment. Topologically, residues 345 to 360 (PALEPKHKGAAISVYN) are cytoplasmic. Residues 361-381 (LSAGMSNFLAPAIAVVLLPFF) form a helical membrane-spanning segment. Residues 382–383 (ST) lie on the Extracellular side of the membrane. The helical transmembrane segment at 384 to 404 (IGVVIAYTALYVVAFFLCAFI) threads the bilayer. Over 405–425 (RVEQPGFSHKEATAREQVEFS) the chain is Cytoplasmic.

It belongs to the major facilitator superfamily. Sugar transporter (TC 2.A.1.1) family. CsbX subfamily.

It is found in the cell membrane. The protein is D-arabinitol transporter (dalT) of Klebsiella pneumoniae.